Here is a 247-residue protein sequence, read N- to C-terminus: 2,3-bisphosphoglycerate-dependent phosphoglycerate mutase (247 aa).

Residues 8–15, 21–22, arginine 60, 87–90, lysine 98, 114–115, and 183–184 contribute to the substrate site; these read RHGESTWN, TG, ERHY, RR, and GN. The active-site Tele-phosphohistidine intermediate is histidine 9. The Proton donor/acceptor role is filled by glutamate 87.

The protein belongs to the phosphoglycerate mutase family. BPG-dependent PGAM subfamily. As to quaternary structure, homodimer.

It carries out the reaction (2R)-2-phosphoglycerate = (2R)-3-phosphoglycerate. Its pathway is carbohydrate degradation; glycolysis; pyruvate from D-glyceraldehyde 3-phosphate: step 3/5. Its function is as follows. Catalyzes the interconversion of 2-phosphoglycerate and 3-phosphoglycerate. The protein is 2,3-bisphosphoglycerate-dependent phosphoglycerate mutase of Delftia acidovorans (strain DSM 14801 / SPH-1).